The following is a 24-amino-acid chain: Erythromycin resistance leader peptide (24 aa).

The segment covering 1–14 (MSMGIAARPPRAAL) has biased composition (low complexity). Positions 1–24 (MSMGIAARPPRAALLPPPSVPRSR) are disordered. A compositionally biased stretch (pro residues) spans 15–24 (LPPPSVPRSR).

This peptide is involved in the control mechanism of the synthesis of the macrolide-lincosamide-streptogramin B resistance protein. In Streptomyces fradiae (Streptomyces roseoflavus), this protein is Erythromycin resistance leader peptide.